Reading from the N-terminus, the 145-residue chain is Photosystem I reaction center subunit XI (145 aa).

3 consecutive transmembrane segments (helical) span residues 48–68 (LEIG…LGPL), 75–95 (LLVG…ALTI), and 125–145 (IGAL…SFFA).

It belongs to the PsaL family.

It is found in the plastid. Its subcellular location is the chloroplast thylakoid membrane. The sequence is that of Photosystem I reaction center subunit XI from Isochrysis galbana (Marine planktonic alga).